A 256-amino-acid polypeptide reads, in one-letter code: Trypsin epsilon (256 aa).

The N-terminal stretch at Met-1–Gly-22 is a signal peptide. The propeptide at Leu-23 to Arg-30 is activation peptide. The region spanning Ile-31–Arg-254 is the Peptidase S1 domain. Residues Cys-56 and Cys-72 are joined by a disulfide bond. Active-site charge relay system residues include His-71 and Asp-116. Intrachain disulfides connect Cys-180-Cys-197 and Cys-206-Cys-230. Ser-210 (charge relay system) is an active-site residue.

This sequence belongs to the peptidase S1 family.

The protein localises to the secreted. It is found in the extracellular space. The catalysed reaction is Preferential cleavage: Arg-|-Xaa, Lys-|-Xaa.. In Drosophila erecta (Fruit fly), this protein is Trypsin epsilon (epsilonTry).